The sequence spans 205 residues: Molybdenum cofactor guanylyltransferase (205 aa).

Residues 14–16 (LAG), K27, D77, and D107 each bind GTP. Mg(2+) is bound at residue D107.

This sequence belongs to the MobA family. As to quaternary structure, monomer. It depends on Mg(2+) as a cofactor.

It localises to the cytoplasm. The catalysed reaction is Mo-molybdopterin + GTP + H(+) = Mo-molybdopterin guanine dinucleotide + diphosphate. In terms of biological role, transfers a GMP moiety from GTP to Mo-molybdopterin (Mo-MPT) cofactor (Moco or molybdenum cofactor) to form Mo-molybdopterin guanine dinucleotide (Mo-MGD) cofactor. This chain is Molybdenum cofactor guanylyltransferase, found in Burkholderia vietnamiensis (strain G4 / LMG 22486) (Burkholderia cepacia (strain R1808)).